A 945-amino-acid chain; its full sequence is Microtubule cross-linking factor 3 (945 aa).

Composition is skewed to low complexity over residues 1–23 (MSQP…AAAT), 72–93 (QQQL…TSGT), and 110–126 (PKGA…GAEG). Positions 1–25 (MSQPPSGGAAPAATSASAAAAATEA) are cleaved as a signal peptide. Disordered regions lie at residues 1–250 (MSQP…SYWK), 265–293 (KERA…PVAG), 307–366 (SPMA…TLKN), and 494–522 (LSLK…DNED). Basic and acidic residues predominate over residues 141–151 (GQPEEAPREIE). The span at 164–179 (GGVGGGGEGGGAGGGP) shows a compositional bias: gly residues. Residues 219–235 (TAATSKTPGPGSRNSGS) show a composition bias toward low complexity. Positions 236–247 (GSTGSGSGGGGS) are enriched in gly residues. A compositionally biased stretch (low complexity) spans 328 to 345 (AMQAAAPPSSQPHSQQLQ). Positions 340–724 (HSQQLQEQED…GKVMQLQYEN (385 aa)) form a coiled coil. Composition is skewed to basic and acidic residues over residues 353 to 366 (EMEK…TLKN) and 494 to 511 (LSLK…EKKA). Residue S567 is modified to Phosphoserine. The tract at residues 741 to 811 (GIRGSPRDSD…PWPKSFSDRQ (71 aa)) is disordered. The span at 745-766 (SPRDSDAESDAGKKESDDDSRP) shows a compositional bias: basic and acidic residues. S779 carries the phosphoserine modification. The stretch at 809–833 (DRQQMKDIRSEAERLGKTIDRLIAD) forms a coiled coil. The helical transmembrane segment at 913-933 (PIILLILILVLFSSLSYTTIF) threads the bilayer.

This sequence belongs to the MTCL family.

It is found in the membrane. This Mus musculus (Mouse) protein is Microtubule cross-linking factor 3 (Mtcl3).